The following is a 316-amino-acid chain: MTKLKLKIASRRSKLAMVQTLWVKEQLEKNIPNLEVSIESMATQGDKILDVALAKIGDKGLFTKELEAQMLIGKADIAVHSLKDLPTNLPDGLKLGCITKREDPSDALVVNKKNEIYQLESLPAGSIVGTSSLRRLAQLRYKFPYLNFKDIRGNVITRIEKLDSGEFDCIILAAAGLKRLGFESRIHQIIPNEISLHAVGQGALGIECKSEDKEVLKIISVLEDKASSQKCLAERSFLRELEGGCQVPIGVNSSIQNDEICLKGMVASIDGKKLIKDESSGNVKYPEEVGKKLAEKLKLQGADKILSEIFEQFRDK.

An S-(dipyrrolylmethanemethyl)cysteine modification is found at cysteine 245.

The protein belongs to the HMBS family. In terms of assembly, monomer. Requires dipyrromethane as cofactor.

It carries out the reaction 4 porphobilinogen + H2O = hydroxymethylbilane + 4 NH4(+). Its pathway is porphyrin-containing compound metabolism; protoporphyrin-IX biosynthesis; coproporphyrinogen-III from 5-aminolevulinate: step 2/4. It functions in the pathway porphyrin-containing compound metabolism; chlorophyll biosynthesis. In terms of biological role, tetrapolymerization of the monopyrrole PBG into the hydroxymethylbilane pre-uroporphyrinogen in several discrete steps. This Prochlorococcus marinus (strain MIT 9515) protein is Porphobilinogen deaminase.